The primary structure comprises 344 residues: MTIILAIETSCDETAVAIVNNNLVLSSVVSSQIDLHRLYGGVVPEMASRQHLETINFCLEKAWQETGLNWSEIDGIAATVAPGLVGALMVGMTAAKTLAIVHDKPFIGIHHLEGHIYASYLAESDLKPPFLSLLVSGGHTSLIHVQACGKYQQLGTTRDDAAGEAFDKVARLLNLSYPGGPIIDRMAKDGNPQAFPLPEGKISLPTGGFHAYDSSFSGLKTAVLRLVEKFEPDNLPVADIAASFQDTVARSLTRRTINCALDYGLKTIAIGGGVAANSALRNHLETAAKNHHLTVYFPPLKLCTDNAAMIARAAVDHYDLGHFSDLSIGVRSRLPLSEVMQLYK.

Residues histidine 111 and histidine 115 each contribute to the Fe cation site. Substrate-binding positions include 134–138 (LVSGG), aspartate 167, glycine 180, aspartate 184, and asparagine 277. Position 305 (aspartate 305) interacts with Fe cation.

Belongs to the KAE1 / TsaD family. Requires Fe(2+) as cofactor.

The protein localises to the cytoplasm. The catalysed reaction is L-threonylcarbamoyladenylate + adenosine(37) in tRNA = N(6)-L-threonylcarbamoyladenosine(37) in tRNA + AMP + H(+). Functionally, required for the formation of a threonylcarbamoyl group on adenosine at position 37 (t(6)A37) in tRNAs that read codons beginning with adenine. Is involved in the transfer of the threonylcarbamoyl moiety of threonylcarbamoyl-AMP (TC-AMP) to the N6 group of A37, together with TsaE and TsaB. TsaD likely plays a direct catalytic role in this reaction. The chain is tRNA N6-adenosine threonylcarbamoyltransferase from Microcystis aeruginosa (strain NIES-843 / IAM M-2473).